Here is a 1463-residue protein sequence, read N- to C-terminus: DNA polymerase III PolC-type (1463 aa).

In terms of domain architecture, Exonuclease spans 425–581 (YVVFDVETTG…YDAEATGRLL (157 aa)).

Belongs to the DNA polymerase type-C family. PolC subfamily.

Its subcellular location is the cytoplasm. It carries out the reaction DNA(n) + a 2'-deoxyribonucleoside 5'-triphosphate = DNA(n+1) + diphosphate. In terms of biological role, required for replicative DNA synthesis. This DNA polymerase also exhibits 3' to 5' exonuclease activity. The protein is DNA polymerase III PolC-type of Streptococcus suis (strain 98HAH33).